Here is a 203-residue protein sequence, read N- to C-terminus: Large ribosomal subunit protein bL25 (203 aa).

This sequence belongs to the bacterial ribosomal protein bL25 family. CTC subfamily. As to quaternary structure, part of the 50S ribosomal subunit; part of the 5S rRNA/L5/L18/L25 subcomplex. Contacts the 5S rRNA. Binds to the 5S rRNA independently of L5 and L18.

In terms of biological role, this is one of the proteins that binds to the 5S RNA in the ribosome where it forms part of the central protuberance. The polypeptide is Large ribosomal subunit protein bL25 (Rickettsia africae (strain ESF-5)).